The following is a 406-amino-acid chain: Dual-specificity RNA methyltransferase RlmN (406 aa).

Catalysis depends on Glu-119, which acts as the Proton acceptor. In terms of domain architecture, Radical SAM core spans 125 to 370 (DKGRGTLCVS…AMVRRTRGDD (246 aa)). Cysteines 132 and 375 form a disulfide. Cys-139, Cys-143, and Cys-146 together coordinate [4Fe-4S] cluster. S-adenosyl-L-methionine is bound by residues 192–193 (GE), Ser-224, 246–248 (SLH), and Asn-332. Catalysis depends on Cys-375, which acts as the S-methylcysteine intermediate.

It belongs to the radical SAM superfamily. RlmN family. Requires [4Fe-4S] cluster as cofactor.

Its subcellular location is the cytoplasm. It carries out the reaction adenosine(2503) in 23S rRNA + 2 reduced [2Fe-2S]-[ferredoxin] + 2 S-adenosyl-L-methionine = 2-methyladenosine(2503) in 23S rRNA + 5'-deoxyadenosine + L-methionine + 2 oxidized [2Fe-2S]-[ferredoxin] + S-adenosyl-L-homocysteine. The enzyme catalyses adenosine(37) in tRNA + 2 reduced [2Fe-2S]-[ferredoxin] + 2 S-adenosyl-L-methionine = 2-methyladenosine(37) in tRNA + 5'-deoxyadenosine + L-methionine + 2 oxidized [2Fe-2S]-[ferredoxin] + S-adenosyl-L-homocysteine. In terms of biological role, specifically methylates position 2 of adenine 2503 in 23S rRNA and position 2 of adenine 37 in tRNAs. m2A2503 modification seems to play a crucial role in the proofreading step occurring at the peptidyl transferase center and thus would serve to optimize ribosomal fidelity. This Xylella fastidiosa (strain 9a5c) protein is Dual-specificity RNA methyltransferase RlmN.